Here is a 364-residue protein sequence, read N- to C-terminus: Ribosomal RNA large subunit methyltransferase F (364 aa).

A disordered region spans residues 1 to 30; sequence MTNKRKSAKPLEPAKRAPKPRTKKSRDLSA.

The protein belongs to the methyltransferase superfamily. METTL16/RlmF family.

The protein localises to the cytoplasm. The enzyme catalyses adenosine(1618) in 23S rRNA + S-adenosyl-L-methionine = N(6)-methyladenosine(1618) in 23S rRNA + S-adenosyl-L-homocysteine + H(+). Its function is as follows. Specifically methylates the adenine in position 1618 of 23S rRNA. This Vibrio vulnificus (strain CMCP6) protein is Ribosomal RNA large subunit methyltransferase F.